The sequence spans 179 residues: UPF0227 protein VS_2073 (179 aa).

It belongs to the UPF0227 family.

This is UPF0227 protein VS_2073 from Vibrio atlanticus (strain LGP32) (Vibrio splendidus (strain Mel32)).